The primary structure comprises 120 residues: MSKLNVTNARRKTRVRIALRRTANGRPRLSVFRSSKHIYAQVIDDLKGETLASASSLEKSLRDAGNTGANIDAAKAVGKLLAERAVQQGVKEVVFDRGGYLYHGRVKALADAARESGLSF.

The protein belongs to the universal ribosomal protein uL18 family. Part of the 50S ribosomal subunit; part of the 5S rRNA/L5/L18/L25 subcomplex. Contacts the 5S and 23S rRNAs.

This is one of the proteins that bind and probably mediate the attachment of the 5S RNA into the large ribosomal subunit, where it forms part of the central protuberance. This is Large ribosomal subunit protein uL18 from Rhodopseudomonas palustris (strain BisB5).